Reading from the N-terminus, the 475-residue chain is Eukaryotic translation initiation factor 3 subunit L (475 aa).

Residues 257–451 (DAIRMFSHIL…DLDYAMQGDL (195 aa)) enclose the PCI domain.

Belongs to the eIF-3 subunit L family. As to quaternary structure, component of the eukaryotic translation initiation factor 3 (eIF-3) complex.

It localises to the cytoplasm. Its function is as follows. Component of the eukaryotic translation initiation factor 3 (eIF-3) complex, which is involved in protein synthesis of a specialized repertoire of mRNAs and, together with other initiation factors, stimulates binding of mRNA and methionyl-tRNAi to the 40S ribosome. The eIF-3 complex specifically targets and initiates translation of a subset of mRNAs involved in cell proliferation. In Botryotinia fuckeliana (strain B05.10) (Noble rot fungus), this protein is Eukaryotic translation initiation factor 3 subunit L.